The sequence spans 175 residues: Gamma-crystallin M1 (175 aa).

Beta/gamma crystallin 'Greek key' domains lie at 2 to 40 (GKII…RVES), 41 to 86 (GCFM…RYPY), 89 to 121 (FRMR…RMSD), and 130 to 172 (GHWL…RRIT).

The protein belongs to the beta/gamma-crystallin family. Monomer.

Functionally, crystallins are the dominant structural components of the vertebrate eye lens. The sequence is that of Gamma-crystallin M1 (GM1) from Chiloscyllium indicum (Slender bamboo shark).